A 777-amino-acid chain; its full sequence is Isoamylase (777 aa).

A signal peptide spans 1–32 (MDPHAPQRQRSGQRLRALALAALACALSPAHA). Ca(2+) contacts are provided by Asp162, Glu263, Thr264, Asn266, and Asp293. Asp410 functions as the Nucleophile in the catalytic mechanism. Cys419 and Cys423 are oxidised to a cystine. Glu458 acts as the Proton donor in catalysis.

Belongs to the glycosyl hydrolase 13 family. Monomer. It depends on Ca(2+) as a cofactor.

The enzyme catalyses Hydrolysis of (1-&gt;6)-alpha-D-glucosidic branch linkages in glycogen, amylopectin and their beta-limit dextrins.. Has a high rate of hydrolysis for glycogen. Does not cleave pullulan. The protein is Isoamylase (iam) of Flavobacterium sp.